A 261-amino-acid chain; its full sequence is Acetylglutamate kinase (261 aa).

Residues G45–G46, R67, and N162 contribute to the substrate site.

The protein belongs to the acetylglutamate kinase family. ArgB subfamily.

The protein localises to the cytoplasm. The enzyme catalyses N-acetyl-L-glutamate + ATP = N-acetyl-L-glutamyl 5-phosphate + ADP. Its pathway is amino-acid biosynthesis; L-arginine biosynthesis; N(2)-acetyl-L-ornithine from L-glutamate: step 2/4. Catalyzes the ATP-dependent phosphorylation of N-acetyl-L-glutamate. This chain is Acetylglutamate kinase, found in Bacteroides fragilis (strain ATCC 25285 / DSM 2151 / CCUG 4856 / JCM 11019 / LMG 10263 / NCTC 9343 / Onslow / VPI 2553 / EN-2).